The following is a 90-amino-acid chain: UPF0297 protein OEOE_1166 (90 aa).

It belongs to the UPF0297 family.

The protein is UPF0297 protein OEOE_1166 of Oenococcus oeni (strain ATCC BAA-331 / PSU-1).